A 215-amino-acid polypeptide reads, in one-letter code: Ion-translocating oxidoreductase complex subunit G (215 aa).

A helical membrane pass occupies residues Gly-9 to Gly-29. Residue Thr-176 is modified to FMN phosphoryl threonine.

It belongs to the RnfG family. The complex is composed of six subunits: RnfA, RnfB, RnfC, RnfD, RnfE and RnfG. Requires FMN as cofactor.

The protein localises to the cell inner membrane. In terms of biological role, part of a membrane-bound complex that couples electron transfer with translocation of ions across the membrane. The polypeptide is Ion-translocating oxidoreductase complex subunit G (Pseudoalteromonas atlantica (strain T6c / ATCC BAA-1087)).